A 318-amino-acid polypeptide reads, in one-letter code: Ankyrin repeat domain-containing protein 1 (318 aa).

A coiled-coil region spans residues 37–77 (ALEKQEDLKTTSKSLIELEEEKQIKEKQLKSELLKKKLEER). ANK repeat units lie at residues 118 to 147 (VDQT…DPNT), 151 to 180 (YKRT…NIEF), 184 to 213 (LEST…AINA), 217 to 246 (LLST…DLHA), 250 to 279 (EGDT…DLNI), and 283 to 314 (AGKT…KNSH).

It localises to the nucleus. Functionally, may act as a nuclear transcription factor that negatively regulates the expression of cardiac genes. This Xenopus tropicalis (Western clawed frog) protein is Ankyrin repeat domain-containing protein 1 (ankrd1).